The following is a 419-amino-acid chain: UDP-N-acetylglucosamine 1-carboxyvinyltransferase (419 aa).

Residue 22–23 coordinates phosphoenolpyruvate; that stretch reads KN. Arg93 is a binding site for UDP-N-acetyl-alpha-D-glucosamine. Catalysis depends on Cys117, which acts as the Proton donor. Cys117 is subject to 2-(S-cysteinyl)pyruvic acid O-phosphothioketal. UDP-N-acetyl-alpha-D-glucosamine is bound by residues Asp307 and Ile329.

The protein belongs to the EPSP synthase family. MurA subfamily.

Its subcellular location is the cytoplasm. The catalysed reaction is phosphoenolpyruvate + UDP-N-acetyl-alpha-D-glucosamine = UDP-N-acetyl-3-O-(1-carboxyvinyl)-alpha-D-glucosamine + phosphate. It functions in the pathway cell wall biogenesis; peptidoglycan biosynthesis. Its function is as follows. Cell wall formation. Adds enolpyruvyl to UDP-N-acetylglucosamine. In Pseudoalteromonas atlantica (strain T6c / ATCC BAA-1087), this protein is UDP-N-acetylglucosamine 1-carboxyvinyltransferase.